The following is a 150-amino-acid chain: Large ribosomal subunit protein bL9 (150 aa).

Belongs to the bacterial ribosomal protein bL9 family.

In terms of biological role, binds to the 23S rRNA. The polypeptide is Large ribosomal subunit protein bL9 (Variovorax paradoxus (strain S110)).